Here is a 40-residue protein sequence, read N- to C-terminus: Bacterioferritin heavy chain (40 aa).

The region spanning 1-40 (MRGNPEVIDYLNMLIGGELAARDQYLIHSRMYEDWGLTKY) is the Ferritin-like diiron domain. E18 serves as a coordination point for Fe cation.

Belongs to the bacterioferritin family. Oligomer consisting of two types of subunits: light chain and heavy chain.

In terms of biological role, may perform analogous functions in iron detoxification and storage to that of animal ferritins. Contains approximately 750 iron atoms per molecule. In Absidia spinosa, this protein is Bacterioferritin heavy chain.